The following is a 328-amino-acid chain: GTPase Obg 2 (328 aa).

The Obg domain occupies 1–139; sequence MSFRREKFIE…HCVLLKLKIV (139 aa). Residues 140 to 309 form the OBG-type G domain; the sequence is SDVGIIGMPN…LHAQVKKAVV (170 aa). Residues 146-153, 171-175, 192-195, 259-262, and 290-292 contribute to the GTP site; these read GMPNAGKS, FTTLE, DIPG, NKCD, and GDE. Mg(2+) is bound by residues Ser-153 and Thr-173.

It belongs to the TRAFAC class OBG-HflX-like GTPase superfamily. OBG GTPase family. As to quaternary structure, monomer. Requires Mg(2+) as cofactor.

It is found in the cytoplasm. An essential GTPase which binds GTP, GDP and possibly (p)ppGpp with moderate affinity, with high nucleotide exchange rates and a fairly low GTP hydrolysis rate. Plays a role in control of the cell cycle, stress response, ribosome biogenesis and in those bacteria that undergo differentiation, in morphogenesis control. In Anaplasma marginale (strain Florida), this protein is GTPase Obg 2.